The chain runs to 720 residues: DNA ligase (720 aa).

Residues 57 to 61 (DAEYD), 106 to 107 (SL), and Glu-140 contribute to the NAD(+) site. Lys-142 functions as the N6-AMP-lysine intermediate in the catalytic mechanism. NAD(+) contacts are provided by Arg-163, Glu-200, Lys-316, and Lys-340. Positions 434, 437, 458, and 464 each coordinate Zn(2+). Residues 643-720 (AAASPVSGKT…TEDEWFELVG (78 aa)) enclose the BRCT domain.

This sequence belongs to the NAD-dependent DNA ligase family. LigA subfamily. Mg(2+) serves as cofactor. It depends on Mn(2+) as a cofactor.

The catalysed reaction is NAD(+) + (deoxyribonucleotide)n-3'-hydroxyl + 5'-phospho-(deoxyribonucleotide)m = (deoxyribonucleotide)n+m + AMP + beta-nicotinamide D-nucleotide.. In terms of biological role, DNA ligase that catalyzes the formation of phosphodiester linkages between 5'-phosphoryl and 3'-hydroxyl groups in double-stranded DNA using NAD as a coenzyme and as the energy source for the reaction. It is essential for DNA replication and repair of damaged DNA. The polypeptide is DNA ligase (Xanthobacter autotrophicus (strain ATCC BAA-1158 / Py2)).